The sequence spans 80 residues: Large ribosomal subunit protein uL24 (80 aa).

This sequence belongs to the universal ribosomal protein uL24 family. In terms of assembly, part of the 50S ribosomal subunit.

Functionally, one of two assembly initiator proteins, it binds directly to the 5'-end of the 23S rRNA, where it nucleates assembly of the 50S subunit. One of the proteins that surrounds the polypeptide exit tunnel on the outside of the subunit. This Chlorobaculum parvum (strain DSM 263 / NCIMB 8327) (Chlorobium vibrioforme subsp. thiosulfatophilum) protein is Large ribosomal subunit protein uL24.